Consider the following 113-residue polypeptide: Tyrosine-protein phosphatase 15 (113 aa).

The Tyrosine-protein phosphatase domain maps to 1-113; sequence WRMVYDNNVN…RSTGDGVALI (113 aa).

The protein belongs to the protein-tyrosine phosphatase family.

The enzyme catalyses O-phospho-L-tyrosyl-[protein] + H2O = L-tyrosyl-[protein] + phosphate. In Styela plicata (Wrinkled sea squirt), this protein is Tyrosine-protein phosphatase 15 (STY-15).